A 218-amino-acid polypeptide reads, in one-letter code: Sulfite reductase, assimilatory-type (218 aa).

[4Fe-4S] cluster is bound by residues C91, C97, C131, and C135. C135 is a siroheme binding site.

Its function is as follows. This enzyme catalyzes the 6-electron reduction of sulfite to sulfide. This is one of several activities required for the biosynthesis of L-cysteine from sulfate. The polypeptide is Sulfite reductase, assimilatory-type (Nitratidesulfovibrio vulgaris (strain ATCC 29579 / DSM 644 / CCUG 34227 / NCIMB 8303 / VKM B-1760 / Hildenborough) (Desulfovibrio vulgaris)).